A 456-amino-acid chain; its full sequence is Hydroxyproline dehydrogenase (456 aa).

Residues K310 and K320 each carry the N6-acetyllysine modification.

This sequence belongs to the proline oxidase family. It depends on FAD as a cofactor.

The catalysed reaction is trans-4-hydroxy-L-proline + a quinone = (3R,5S)-1-pyrroline-3-hydroxy-5-carboxylate + a quinol + H(+). The enzyme catalyses L-proline + a quinone = (S)-1-pyrroline-5-carboxylate + a quinol + H(+). In terms of biological role, dehydrogenase that converts trans-4-L-hydroxyproline to delta-1-pyrroline-3-hydroxy-5-carboxylate (Hyp) using ubiquinone-10 as the terminal electron acceptor. Can also use proline as a substrate but with a very much lower efficiency. Does not react with other diastereomers of Hyp: trans-4-D-hydroxyproline and cis-4-L-hydroxyproline. Ubiquininone analogs such as menadione, duroquinone and ubiquinone-1 react more efficiently than oxygen as the terminal electron acceptor during catalysis. This Rattus norvegicus (Rat) protein is Hydroxyproline dehydrogenase.